Here is a 1441-residue protein sequence, read N- to C-terminus: MHDYLGSFYNPLTLQKKLKYIHHIIINYITNSILYFFLIMQSKNNPKHNSMKFKEQTESPILNQSKLVNTLDIIKDEINKWEEKNTDKDIKIVSIDNGKIVLSMVYGKQHIIEILCPKDYPNVKSGFSCKEIKTVNTIPLSFISQANNQLKSKKNLSVHRIISHLSTTFQNYKKALKSKVSKDKMKDKSESNSEHEQESKSVVSNEIPSEVSIDSKLTKDINFINDLIKEANKCSNDVPSDSDETHQEVDDRPLTEEVVVPDPTRIVRRRNSKLQTGSTKIKIFGKSKNSGPSSSKTSISSMSKVEELEDKNPYLQEQDIMSIIQDEWNKVQESKSICPTTNEDNNDLDNLINEVERLVQETKDQETKDQETKDQKEIWASSLTIEEPNGENFEEFSWEVPNETSQITVVEPVQEATEEPVQNVTEELIQLVADEPVQETVKDSVQEVAEESVQETTVEAVQEIAEESVQQVVEESVQETTVEPVQEVAEEAVQQVVEESVQETTVEPVQEVAEEPVQQEVAEEPVQQEVAEEPVQQEVAEEPVQEVAEEPVQKATEELVQQEVAEDIVKLDVTVQNDFSDHSDSPEPSDSSDSEEEITNSNNLGRYFKIYDPTTGKTTGVYVGKTPTQAANKAFIKTFSNDNTGNKKEFYLQEYTGNKPGKIYKYEGTRQKLNQPQKISIPLYGDGQYKTITYNYKNTVVKKNVPDSIKNPPKTIKKSIKPVKKSIKPVKKLSTTKLDSQTNSVKEKSENKDIINYNDTGDKYGLYIDFGKFFKNSKIPFDLEKLRDNALKLSNQENQDDNYSTMKLRNFKNNNAVNLMINDFTKLYNDGVKNGYNIEPVNNNIYDLDILLSSNFLDKDSVLYQDMINLKIDHIKINIKINHKMYPFYPPQVSLIRPTIENNVAAIIATIDYLFANKWNPMISIVNIVNDIRNILNKYGALDEKKYQNNLDPIFHDLVELSLLTGTQCSMYQSDQKVIDLSNNSTNEKQSKYWKKGTGFGHSGLSDWDFNQTKENIKNRELKIYQCLRKIVVKLTKIILGKNQVDVINILKESCFIPYLKLVFIDGSLFDLVKDLSYFELVLNSMRILTKEYLPLFLHKYNDKSLLEVLDQFNKDCHSYLNTLKNIKESDCQNEIDIIENFMSFYKRLSTSIEKFNEITESNNKEEVISNDVKDLYKITLGNEVFQEYNLDLNKFANMLTNDTKKEGLIHKDALKAISRELLSHSKNLPVEYGSSIYYRYSPENIRYHEFIITGPEDSPYDSGCFHFRMYNPSAYPNTSPFVSMTTTGHGSVRFNPNLYADGKVCLSILGTWRGQAGESWIPGVSSMLQVMISIQSLVLISEPYFNEPGYESSRGTDKGNKLSTEYNQKVRFNCMKWAMIDVIKNPVPGFESMIKKHFSIKAPHIKQVCQTWINEAPDNNKSEYQKLYDELIGLLDSLVA.

Residues Tyr-20–Met-40 traverse the membrane as a helical segment. A coiled-coil region spans residues Asn-63–Asp-89. A compositionally biased stretch (basic and acidic residues) spans Val-180 to Ser-199. Disordered stretches follow at residues Val-180–Ile-207 and Ile-283–Val-305. Residues Lys-286–Ser-303 are compositionally biased toward low complexity. Residues Thr-340–Lys-368 are a coiled coil. Residues Thr-505–Glu-538 show a composition bias toward low complexity. Disordered regions lie at residues Thr-505–Lys-554 and Asn-577–Gly-605. Residues Val-539–Glu-549 are compositionally biased toward acidic residues. The UBC core domain maps to Ala-1217–Met-1380. Cys-1306 functions as the Glycyl thioester intermediate in the catalytic mechanism.

This sequence belongs to the ubiquitin-conjugating enzyme family.

The protein resides in the membrane. It carries out the reaction S-ubiquitinyl-[E1 ubiquitin-activating enzyme]-L-cysteine + [E2 ubiquitin-conjugating enzyme]-L-cysteine = [E1 ubiquitin-activating enzyme]-L-cysteine + S-ubiquitinyl-[E2 ubiquitin-conjugating enzyme]-L-cysteine.. It participates in protein modification; protein ubiquitination. In terms of biological role, catalyzes the covalent attachment of ubiquitin to other proteins. This chain is Probable ubiquitin-conjugating enzyme E2 R521, found in Acanthamoeba polyphaga (Amoeba).